A 154-amino-acid chain; its full sequence is S-ribosylhomocysteine lyase (154 aa).

Fe cation is bound by residues H57, H61, and C124.

The protein belongs to the LuxS family. In terms of assembly, homodimer. Fe cation serves as cofactor.

The enzyme catalyses S-(5-deoxy-D-ribos-5-yl)-L-homocysteine = (S)-4,5-dihydroxypentane-2,3-dione + L-homocysteine. In terms of biological role, involved in the synthesis of autoinducer 2 (AI-2) which is secreted by bacteria and is used to communicate both the cell density and the metabolic potential of the environment. The regulation of gene expression in response to changes in cell density is called quorum sensing. Catalyzes the transformation of S-ribosylhomocysteine (RHC) to homocysteine (HC) and 4,5-dihydroxy-2,3-pentadione (DPD). The chain is S-ribosylhomocysteine lyase from Exiguobacterium sibiricum (strain DSM 17290 / CCUG 55495 / CIP 109462 / JCM 13490 / 255-15).